The following is a 367-amino-acid chain: Apolipoprotein A-V (367 aa).

Positions 1–20 are cleaved as a signal peptide; that stretch reads MVAVLTWALALLSAFATVQT. Serine 56 carries the phosphoserine modification. A disordered region spans residues 71–90; the sequence is LGPLSGQGREPPGLPHDPEG.

It belongs to the apolipoprotein A1/A4/E family. In terms of assembly, interacts with GPIHBP1. Interacts with SORL1; this interaction leads to APOA5 internalization and sorting either to lysosomes and degradation, or to the trans-Golgi network. Phosphorylated by FAM20C in the extracellular medium.

Its subcellular location is the secreted. The protein localises to the early endosome. It is found in the late endosome. It localises to the golgi apparatus. The protein resides in the trans-Golgi network. In terms of biological role, minor apolipoprotein mainly associated with HDL and to a lesser extent with VLDL. May also be associated with chylomicrons. Important determinant of plasma triglyceride (TG) levels by both being a potent stimulator of apo-CII lipoprotein lipase (LPL) TG hydrolysis and an inhibitor of the hepatic VLDL-TG production rate (without affecting the VLDL-apoB production rate). Activates poorly lecithin:cholesterol acyltransferase (LCAT) and does not enhance efflux of cholesterol from macrophages. Binds heparin. The chain is Apolipoprotein A-V (APOA5) from Leptonychotes weddellii (Weddell seal).